Reading from the N-terminus, the 217-residue chain is Probable transaldolase (217 aa).

Lys-83 serves as the catalytic Schiff-base intermediate with substrate.

It belongs to the transaldolase family. Type 3B subfamily.

It is found in the cytoplasm. The enzyme catalyses D-sedoheptulose 7-phosphate + D-glyceraldehyde 3-phosphate = D-erythrose 4-phosphate + beta-D-fructose 6-phosphate. It functions in the pathway carbohydrate degradation; pentose phosphate pathway; D-glyceraldehyde 3-phosphate and beta-D-fructose 6-phosphate from D-ribose 5-phosphate and D-xylulose 5-phosphate (non-oxidative stage): step 2/3. Its function is as follows. Transaldolase is important for the balance of metabolites in the pentose-phosphate pathway. This is Probable transaldolase from Erythrobacter litoralis (strain HTCC2594).